Here is a 223-residue protein sequence, read N- to C-terminus: tRNA (guanine-N(7)-)-methyltransferase (223 aa).

S-adenosyl-L-methionine is bound by residues E45, E70, and D125. Residue D125 is part of the active site. Residues K129, D161, and T201–E204 contribute to the substrate site.

The protein belongs to the class I-like SAM-binding methyltransferase superfamily. TrmB family.

The catalysed reaction is guanosine(46) in tRNA + S-adenosyl-L-methionine = N(7)-methylguanosine(46) in tRNA + S-adenosyl-L-homocysteine. It participates in tRNA modification; N(7)-methylguanine-tRNA biosynthesis. In terms of biological role, catalyzes the formation of N(7)-methylguanine at position 46 (m7G46) in tRNA. This chain is tRNA (guanine-N(7)-)-methyltransferase, found in Mesoplasma florum (strain ATCC 33453 / NBRC 100688 / NCTC 11704 / L1) (Acholeplasma florum).